The sequence spans 183 residues: Probable actin-related protein 2/3 complex subunit 3 (183 aa).

Belongs to the ARPC3 family. As to quaternary structure, component of the Arp2/3 complex.

It localises to the cytoplasm. It is found in the cytoskeleton. In terms of biological role, functions as a component of the Arp2/3 complex which is involved in regulation of actin polymerization and together with an activating nucleation-promoting factor (NPF) mediates the formation of branched actin networks. This is Probable actin-related protein 2/3 complex subunit 3 (arx-5) from Caenorhabditis elegans.